A 379-amino-acid chain; its full sequence is Cytochrome b (379 aa).

Helical transmembrane passes span 33–53 (FGSL…FLAM), 77–98 (WLIR…YLHI), 113–133 (WNIG…GYVL), and 178–198 (FFAF…LHLL). Positions 83 and 97 each coordinate heme b. His-182 and His-196 together coordinate heme b. His-201 contacts a ubiquinone. A run of 4 helical transmembrane segments spans residues 226 to 246 (YKDL…ALFY), 288 to 308 (LGGV…PILH), 320 to 340 (ASQL…WIGG), and 347 to 367 (YIII…VLNP).

It belongs to the cytochrome b family. As to quaternary structure, the cytochrome bc1 complex contains 3 respiratory subunits (MT-CYB, CYC1 and UQCRFS1), 2 core proteins (UQCRC1 and UQCRC2) and probably 6 low-molecular weight proteins. The cofactor is heme b.

It localises to the mitochondrion inner membrane. Its function is as follows. Component of the ubiquinol-cytochrome c reductase complex (complex III or cytochrome b-c1 complex) that is part of the mitochondrial respiratory chain. The b-c1 complex mediates electron transfer from ubiquinol to cytochrome c. Contributes to the generation of a proton gradient across the mitochondrial membrane that is then used for ATP synthesis. This chain is Cytochrome b (mt-cyb), found in Anguilla anguilla (European freshwater eel).